Consider the following 169-residue polypeptide: S-ribosylhomocysteine lyase (169 aa).

Residues H54, H58, and C128 each contribute to the Fe cation site.

This sequence belongs to the LuxS family. Homodimer. It depends on Fe cation as a cofactor.

The enzyme catalyses S-(5-deoxy-D-ribos-5-yl)-L-homocysteine = (S)-4,5-dihydroxypentane-2,3-dione + L-homocysteine. Functionally, involved in the synthesis of autoinducer 2 (AI-2) which is secreted by bacteria and is used to communicate both the cell density and the metabolic potential of the environment. The regulation of gene expression in response to changes in cell density is called quorum sensing. Catalyzes the transformation of S-ribosylhomocysteine (RHC) to homocysteine (HC) and 4,5-dihydroxy-2,3-pentadione (DPD). This Shewanella amazonensis (strain ATCC BAA-1098 / SB2B) protein is S-ribosylhomocysteine lyase.